The following is a 240-amino-acid chain: Methylthioribulose-1-phosphate dehydratase (240 aa).

Cys-99 serves as a coordination point for substrate. The Zn(2+) site is built by His-116 and His-118. Glu-145 functions as the Proton donor/acceptor in the catalytic mechanism. Residue His-201 participates in Zn(2+) binding.

The protein belongs to the aldolase class II family. MtnB subfamily. Requires Zn(2+) as cofactor.

It is found in the cytoplasm. It catalyses the reaction 5-(methylsulfanyl)-D-ribulose 1-phosphate = 5-methylsulfanyl-2,3-dioxopentyl phosphate + H2O. The protein operates within amino-acid biosynthesis; L-methionine biosynthesis via salvage pathway; L-methionine from S-methyl-5-thio-alpha-D-ribose 1-phosphate: step 2/6. Catalyzes the dehydration of methylthioribulose-1-phosphate (MTRu-1-P) into 2,3-diketo-5-methylthiopentyl-1-phosphate (DK-MTP-1-P). The chain is Methylthioribulose-1-phosphate dehydratase from Ajellomyces capsulatus (strain H143) (Darling's disease fungus).